The chain runs to 495 residues: MGNILKCFISCFDGEDEDGGSGHGRFPNSYPPVSSLHYQPLHLDDLQVPLSPPPPSTRQQQPPPRPALSRLHYQPLRLADLQVPLSPPPPSTRQQQLPPRPARPLGYHHGVLWPTIEITPCDDFLNLEFTTKVCEGPQHHSTPSRKTDLNRCIHEKDDGNSKPSYYWLTKNKDNHVVTPQTKRSPRPPSGVAALERDLVDFTRTFEVPEGLAQHVTSPMQAQVTWYRKLLAAYKDIKYPPKESADAAVLVAATLRGIERTNLEGILAFYGFPIPTISKEASENHPSSIPKGVLFVLKTLPVNAKCIVDGDGFTAYVDTLDPIELRQDCNASCQSRNSKKQKLWDKTAADLQISLENTGQKKMFFGGREILARKYEIRLRGIDAPEIGMQYGKESQDALVKLIARKCVTLHVYGQDQFKRFVCDIHCGGVFIQEQMLVNGHAWHFKNYDKRPQFAKWEKMARDARQGLWAYDNLEKPWEWRKNKRKASRHHNSDVR.

The N-myristoyl glycine moiety is linked to residue glycine 2. Cysteine 11 carries S-palmitoyl cysteine lipidation. Disordered regions lie at residues 45 to 68 (DLQV…RPAL) and 81 to 101 (LQVP…PPRP). Positions 50-66 (LSPPPPSTRQQQPPPRP) are enriched in pro residues. Residues 297–470 (KTLPVNAKCI…RDARQGLWAY (174 aa)) enclose the TNase-like domain. Aspartate 310 lines the Ca(2+) pocket. Residue arginine 377 is part of the active site. A Ca(2+)-binding site is contributed by aspartate 382. Residues glutamate 385 and arginine 419 contribute to the active site.

The protein belongs to the thermonuclease family. Ca(2+) is required as a cofactor.

Its subcellular location is the cell membrane. In terms of biological role, enzyme that catalyzes the hydrolysis of both DNA and RNA at the 5' position of the phosphodiester bond. The protein is Probable staphylococcal-like nuclease CAN4 of Oryza sativa subsp. japonica (Rice).